The sequence spans 451 residues: tRNA modification GTPase MnmE (451 aa).

(6S)-5-formyl-5,6,7,8-tetrahydrofolate is bound by residues Arg-37, Glu-95, and Lys-135. The region spanning 232-376 (GLSIVIMGPP…LVEAIADFAG (145 aa)) is the TrmE-type G domain. Asn-242 serves as a coordination point for K(+). GTP is bound by residues 242-247 (NAGKST), 261-267 (SEIAGTT), and 286-289 (DTAG). Position 246 (Ser-246) interacts with Mg(2+). Positions 261, 263, and 266 each coordinate K(+). Thr-267 provides a ligand contact to Mg(2+). Lys-451 contributes to the (6S)-5-formyl-5,6,7,8-tetrahydrofolate binding site.

It belongs to the TRAFAC class TrmE-Era-EngA-EngB-Septin-like GTPase superfamily. TrmE GTPase family. In terms of assembly, homodimer. Heterotetramer of two MnmE and two MnmG subunits. It depends on K(+) as a cofactor.

The protein resides in the cytoplasm. Its function is as follows. Exhibits a very high intrinsic GTPase hydrolysis rate. Involved in the addition of a carboxymethylaminomethyl (cmnm) group at the wobble position (U34) of certain tRNAs, forming tRNA-cmnm(5)s(2)U34. This Beijerinckia indica subsp. indica (strain ATCC 9039 / DSM 1715 / NCIMB 8712) protein is tRNA modification GTPase MnmE.